A 340-amino-acid polypeptide reads, in one-letter code: UDP-N-acetylglucosamine--N-acetylmuramyl-(pentapeptide) pyrophosphoryl-undecaprenol N-acetylglucosamine transferase (340 aa).

UDP-N-acetyl-alpha-D-glucosamine-binding positions include 10–12 (TGG), N110, S171, and Q272.

This sequence belongs to the glycosyltransferase 28 family. MurG subfamily.

The protein localises to the cell membrane. It catalyses the reaction di-trans,octa-cis-undecaprenyl diphospho-N-acetyl-alpha-D-muramoyl-L-alanyl-D-glutamyl-meso-2,6-diaminopimeloyl-D-alanyl-D-alanine + UDP-N-acetyl-alpha-D-glucosamine = di-trans,octa-cis-undecaprenyl diphospho-[N-acetyl-alpha-D-glucosaminyl-(1-&gt;4)]-N-acetyl-alpha-D-muramoyl-L-alanyl-D-glutamyl-meso-2,6-diaminopimeloyl-D-alanyl-D-alanine + UDP + H(+). The protein operates within cell wall biogenesis; peptidoglycan biosynthesis. In terms of biological role, cell wall formation. Catalyzes the transfer of a GlcNAc subunit on undecaprenyl-pyrophosphoryl-MurNAc-pentapeptide (lipid intermediate I) to form undecaprenyl-pyrophosphoryl-MurNAc-(pentapeptide)GlcNAc (lipid intermediate II). The polypeptide is UDP-N-acetylglucosamine--N-acetylmuramyl-(pentapeptide) pyrophosphoryl-undecaprenol N-acetylglucosamine transferase (Wolbachia pipientis subsp. Culex pipiens (strain wPip)).